A 397-amino-acid chain; its full sequence is Elongation factor Tu (397 aa).

In terms of domain architecture, tr-type G spans 10-206 (KPHVNVGTIG…TMDTYFPQPE (197 aa)). The tract at residues 19–26 (GHVDHGKT) is G1. 19-26 (GHVDHGKT) provides a ligand contact to GTP. Thr26 contacts Mg(2+). Residues 60 to 64 (GITIA) form a G2 region. The segment at 81 to 84 (DCPG) is G3. GTP-binding positions include 81 to 85 (DCPGH) and 136 to 139 (NKAD). Positions 136 to 139 (NKAD) are G4. Residues 174–176 (SAL) form a G5 region.

The protein belongs to the TRAFAC class translation factor GTPase superfamily. Classic translation factor GTPase family. EF-Tu/EF-1A subfamily. Monomer.

It localises to the cytoplasm. It carries out the reaction GTP + H2O = GDP + phosphate + H(+). Its function is as follows. GTP hydrolase that promotes the GTP-dependent binding of aminoacyl-tRNA to the A-site of ribosomes during protein biosynthesis. This Coxiella burnetii (strain Dugway 5J108-111) protein is Elongation factor Tu.